The sequence spans 94 residues: Small ubiquitin-related modifier 3 (94 aa).

Residue Lys-11 forms a Glycyl lysine isopeptide (Lys-Gly) (interchain with G-Cter in SUMO) linkage. Positions 15–92 (DHINLKVAGQ…IDVFQQQTGG (78 aa)) constitute a Ubiquitin-like domain. Gly-92 is covalently cross-linked (Glycyl lysine isopeptide (Gly-Lys) (interchain with K-? in acceptor proteins)). A propeptide spanning residues 93–94 (VC) is cleaved from the precursor.

The protein belongs to the ubiquitin family. SUMO subfamily. Interacts with sae2 and ube2i. Covalently attached to a number of proteins. In terms of processing, polymeric chains can be formed through Lys-11 cross-linking. Post-translationally, cleavage of precursor form by a sentrin-specific protease is necessary for function.

It is found in the cytoplasm. The protein resides in the nucleus. It localises to the PML body. In terms of biological role, ubiquitin-like protein which can be covalently attached to target lysines either as a monomer or as a lysine-linked polymer. Does not seem to be involved in protein degradation and may function as an antagonist of ubiquitin in the degradation process. Plays a role in a number of cellular processes such as nuclear transport, DNA replication and repair, mitosis and signal transduction. Covalent attachment to its substrates requires prior activation by the E1 complex sae1-sae2 and linkage to the E2 enzyme ube2i. In Xenopus laevis (African clawed frog), this protein is Small ubiquitin-related modifier 3 (sumo3).